A 281-amino-acid chain; its full sequence is Protoheme IX farnesyltransferase (281 aa).

A run of 9 helical transmembrane segments spans residues 13–33, 38–58, 85–105, 107–127, 132–152, 161–181, 206–226, 227–247, and 261–281; these read VIWLLVLSALVGYIAAAGPLV, LIELTVVGFLSTGGSAAFNMY, ALTFSIAVSLSGFTLSYLWLG, WVTLMIALGWFFYAVLYTIML, WLNIVIGGFAGNAALLSGWIM, ILLSMVIYVWIPAHIWSLAYY, IISILNLVSIIYMLVLYQLYM, AKLIGYILVIPATLAGIIVTI, and MFKATSPILLLFLLAVIISRI.

It belongs to the UbiA prenyltransferase family. Protoheme IX farnesyltransferase subfamily.

Its subcellular location is the cell membrane. The enzyme catalyses heme b + (2E,6E)-farnesyl diphosphate + H2O = Fe(II)-heme o + diphosphate. It participates in porphyrin-containing compound metabolism; heme O biosynthesis; heme O from protoheme: step 1/1. In terms of biological role, converts heme B (protoheme IX) to heme O by substitution of the vinyl group on carbon 2 of heme B porphyrin ring with a hydroxyethyl farnesyl side group. In Caldivirga maquilingensis (strain ATCC 700844 / DSM 13496 / JCM 10307 / IC-167), this protein is Protoheme IX farnesyltransferase.